A 1094-amino-acid polypeptide reads, in one-letter code: DNA polymerase delta catalytic subunit (1094 aa).

Residues Cys-1003, Cys-1006, Cys-1016, and Cys-1019 each coordinate Zn(2+). A CysA-type zinc finger spans residues 1003–1019 (CIGCNSSIKKPPLCNHC). Positions 1049, 1052, 1062, and 1067 each coordinate [4Fe-4S] cluster. Positions 1049 to 1067 (CQRCQGNLHVDVICMNRDC) match the CysB motif motif.

It belongs to the DNA polymerase type-B family. As to quaternary structure, heterodimer composed of a catalytic subunit POLD and a small regulatory subunit. [4Fe-4S] cluster serves as cofactor. Mg(2+) is required as a cofactor.

The protein localises to the nucleus. It carries out the reaction DNA(n) + a 2'-deoxyribonucleoside 5'-triphosphate = DNA(n+1) + diphosphate. With respect to regulation, the small regulatory subunit delta and PCNA1 increase POLD catalytic activity. In terms of biological role, this polymerase possesses two enzymatic activities: DNA synthesis (polymerase) and an exonucleolytic activity that degrades single-stranded DNA in the 3'- to 5'-direction. The chain is DNA polymerase delta catalytic subunit (POLD) from Plasmodium falciparum (isolate K1 / Thailand).